The primary structure comprises 838 residues: P protein (838 aa).

Residues 1–179 (MHLEGRDGRR…KLRRCVQWLK (179 aa)) lie on the Cytoplasmic side of the membrane. Disordered stretches follow at residues 38–60 (LPRG…GQSS) and 74–94 (KGRS…DSCF). The segment covering 78-87 (HSSLPQMSSS) has biased composition (polar residues). The chain crosses the membrane as a helical span at residues 180–197 (VMGLFAFVVLCSILFSLY). The Extracellular portion of the chain corresponds to 198–330 (PDQGKLWQLL…QYLRGSVETQ (133 aa)). Residues N214, N218, and N273 are each glycosylated (N-linked (GlcNAc...) asparagine). A helical transmembrane segment spans residues 331-347 (VTIATAILAGVYALIIF). The Cytoplasmic segment spans residues 348-353 (EIVHRT). A helical transmembrane segment spans residues 354–370 (LAAMLGSLAALAALAVI). Residues 371–384 (GDRPSLTHVVEWID) lie on the Extracellular side of the membrane. A helical membrane pass occupies residues 385–401 (FETLALLFGMMILVAIF). The Cytoplasmic portion of the chain corresponds to 402-423 (SETGFFDYCAVKAYRLSRGRVW). Residues 424–440 (AMIIMLCLIAAVLSAFL) traverse the membrane as a helical segment. Over 441–513 (DNVTTMLLFT…DFAGFTAHMF (73 aa)) the chain is Extracellular. An N-linked (GlcNAc...) asparagine glycan is attached at N442. A helical transmembrane segment spans residues 514-530 (IGICLVLLVCFPLLRLL). At 531 to 620 (YWNRKLYNKE…LQKKHRISDG (90 aa)) the chain is on the cytoplasmic side. Residues 621–637 (ILLAKCLTVLGFVIFMF) traverse the membrane as a helical segment. Residues 638 to 647 (FLNSFVPGIH) lie on the Extracellular side of the membrane. Residues 648 to 664 (LDLGWIAILGAIWLLIL) form a helical membrane-spanning segment. At 665–679 (ADIHDFEIILHRVEW) the chain is on the cytoplasmic side. A helical membrane pass occupies residues 680 to 696 (ATLLFFAALFVLMEALA). The Extracellular segment spans residues 697–720 (HLHLIEYVGEQTALLIKMVPEEQR). A helical membrane pass occupies residues 721-737 (LIAAIVLVVWVSALASS). Residues 738 to 760 (LIDNIPFTATMIPVLLNLSHDPE) are Cytoplasmic-facing. Residues 761-777 (VGLPAPPLMYALAFGAC) form a helical membrane-spanning segment. Over 778–817 (LGGNGTLIGASANVVCAGIAEQHGYGFSFMEFFRLGFPMM) the chain is Extracellular. N781 is a glycosylation site (N-linked (GlcNAc...) asparagine). Residues 818–834 (VVSCTVGMCYLLVAHVV) form a helical membrane-spanning segment. Topologically, residues 835–838 (VGWN) are cytoplasmic.

The protein belongs to the CitM (TC 2.A.11) transporter family. In terms of tissue distribution, expressed in melanocytes and retinal pigment epithelium.

It localises to the melanosome membrane. It catalyses the reaction chloride(in) = chloride(out). Contributes to a melanosome-specific anion (chloride) current that modulates melanosomal pH for optimal tyrosinase activity required for melanogenesis and the melanosome maturation. One of the components of the mammalian pigmentary system. May serve as a key control point at which ethnic skin color variation is determined. Major determinant of brown and/or blue eye color. Seems to regulate the post-translational processing of tyrosinase, which catalyzes the limiting reaction in melanin synthesis. This chain is P protein, found in Homo sapiens (Human).